Here is a 91-residue protein sequence, read N- to C-terminus: Small ribosomal subunit protein bS18 (91 aa).

Belongs to the bacterial ribosomal protein bS18 family. In terms of assembly, part of the 30S ribosomal subunit. Forms a tight heterodimer with protein bS6.

Functionally, binds as a heterodimer with protein bS6 to the central domain of the 16S rRNA, where it helps stabilize the platform of the 30S subunit. This Burkholderia vietnamiensis (strain G4 / LMG 22486) (Burkholderia cepacia (strain R1808)) protein is Small ribosomal subunit protein bS18.